The following is a 456-amino-acid chain: Putrescine--pyruvate aminotransferase (456 aa).

Substrate is bound at residue Tyr-156. A pyridoxal 5'-phosphate-binding site is contributed by Asp-262. Residue Lys-291 is modified to N6-(pyridoxal phosphate)lysine. Gly-322 and Arg-417 together coordinate substrate.

It belongs to the class-III pyridoxal-phosphate-dependent aminotransferase family. Pyridoxal 5'-phosphate is required as a cofactor.

The catalysed reaction is putrescine + pyruvate = 4-aminobutanal + L-alanine. Its pathway is amine and polyamine degradation; putrescine degradation; 4-aminobutanal from putrescine (transaminase route). In terms of biological role, involved in the putrescine catabolism. Catalyzes the transfer of the amino group from putrescine to pyruvate to yield 4-aminobutanal and alanine. The protein is Putrescine--pyruvate aminotransferase of Pseudomonas aeruginosa (strain ATCC 15692 / DSM 22644 / CIP 104116 / JCM 14847 / LMG 12228 / 1C / PRS 101 / PAO1).